Here is a 410-residue protein sequence, read N- to C-terminus: UBX domain-containing protein 3 (410 aa).

Disordered stretches follow at residues 46 to 139 (EEDH…PDPK) and 154 to 212 (TISP…EKPL). The segment covering 65 to 85 (GSSSGISGGDQQPPRPLQRQQ) has biased composition (low complexity). A compositionally biased stretch (polar residues) spans 86–97 (NTQGQGMKSGTA). A phosphoserine mark is found at serine 156, serine 167, and serine 186. Low complexity predominate over residues 163 to 174 (SGPSSLASSWAS). Residues 183–196 (NEASGSTTPVTQSG) show a composition bias toward polar residues. Threonine 190 is modified (phosphothreonine). Residues 211–276 (PLRRTLYFWR…VQHRMDEDYV (66 aa)) enclose the SEP domain. Residues 334-410 (ENKPTTRIQV…KNASLVQKSL (77 aa)) form the UBX domain.

Interacts with cdc48.

Its function is as follows. Involved in CDC48-dependent protein degradation through the ubiquitin/proteasome pathway. Involved in delivery of substrates to the 26S proteasome. Also required for membrane fusion and sporulation. This chain is UBX domain-containing protein 3 (ubx3), found in Schizosaccharomyces pombe (strain 972 / ATCC 24843) (Fission yeast).